Reading from the N-terminus, the 103-residue chain is Large ribosomal subunit protein bL21 (103 aa).

It belongs to the bacterial ribosomal protein bL21 family. In terms of assembly, part of the 50S ribosomal subunit. Contacts protein L20.

Functionally, this protein binds to 23S rRNA in the presence of protein L20. This chain is Large ribosomal subunit protein bL21, found in Klebsiella pneumoniae (strain 342).